We begin with the raw amino-acid sequence, 348 residues long: Sulfate/thiosulfate import ATP-binding protein CysA (348 aa).

In terms of domain architecture, ABC transporter spans 3–237 (IRIQELRKQF…PSSPFVYSFV (235 aa)). Residue 35 to 42 (GPSGSGKT) participates in ATP binding.

Belongs to the ABC transporter superfamily. Sulfate/tungstate importer (TC 3.A.1.6) family. As to quaternary structure, the complex is composed of two ATP-binding proteins (CysA), two transmembrane proteins (CysT and CysW) and a solute-binding protein (CysP).

It is found in the cell inner membrane. It catalyses the reaction sulfate(out) + ATP + H2O = sulfate(in) + ADP + phosphate + H(+). It carries out the reaction thiosulfate(out) + ATP + H2O = thiosulfate(in) + ADP + phosphate + H(+). Part of the ABC transporter complex CysAWTP involved in sulfate/thiosulfate import. Responsible for energy coupling to the transport system. The chain is Sulfate/thiosulfate import ATP-binding protein CysA from Xylella fastidiosa (strain Temecula1 / ATCC 700964).